We begin with the raw amino-acid sequence, 334 residues long: Anthranilate phosphoribosyltransferase (334 aa).

5-phospho-alpha-D-ribose 1-diphosphate is bound by residues G79, 82–83 (GD), S87, 89–92 (NIST), 107–115 (KAGNRSISS), and S119. G79 contacts anthranilate. S91 lines the Mg(2+) pocket. Residue N110 coordinates anthranilate. Residue R165 participates in anthranilate binding. Residues D224 and E225 each contribute to the Mg(2+) site.

Belongs to the anthranilate phosphoribosyltransferase family. In terms of assembly, homodimer. Mg(2+) is required as a cofactor.

It catalyses the reaction N-(5-phospho-beta-D-ribosyl)anthranilate + diphosphate = 5-phospho-alpha-D-ribose 1-diphosphate + anthranilate. Its pathway is amino-acid biosynthesis; L-tryptophan biosynthesis; L-tryptophan from chorismate: step 2/5. Its function is as follows. Catalyzes the transfer of the phosphoribosyl group of 5-phosphorylribose-1-pyrophosphate (PRPP) to anthranilate to yield N-(5'-phosphoribosyl)-anthranilate (PRA). This chain is Anthranilate phosphoribosyltransferase, found in Streptococcus thermophilus (strain ATCC BAA-250 / LMG 18311).